Here is a 263-residue protein sequence, read N- to C-terminus: Dihydromethanophenazine:CoB--CoM heterodisulfide reductase subunit E (263 aa).

5 consecutive transmembrane segments (helical) span residues 18–38 (TFVQ…YGLI), 108–128 (VMHL…GMMF), 150–170 (FLSI…LVAL), 184–204 (IMYD…GFIA), and 221–241 (VAPP…IAFI).

The protein belongs to the HdrE family. The dihydromethanophenazine:CoB--CoM heterodisulfide reductase is composed of two subunits; HdrD and HdrE. The cofactor is heme b.

It localises to the cell membrane. It carries out the reaction methanophenazine + coenzyme B + coenzyme M = dihydromethanophenazine + coenzyme M-coenzyme B heterodisulfide. It participates in cofactor metabolism; coenzyme M-coenzyme B heterodisulfide reduction; coenzyme B and coenzyme M from coenzyme M-coenzyme B heterodisulfide: step 1/1. In terms of biological role, part of a complex that catalyzes the reversible reduction of CoM-S-S-CoB to the thiol-coenzymes H-S-CoM (coenzyme M) and H-S-CoB (coenzyme B). HdrE may be responsible for anchoring the complex to the membrane. The protein is Dihydromethanophenazine:CoB--CoM heterodisulfide reductase subunit E (hdrE) of Methanosarcina barkeri (strain Fusaro / DSM 804).